A 1027-amino-acid chain; its full sequence is MDAQIENAIQIAWDPQSDPSLKSQAFEFLQQLRADPSAWHICSTLFTKSPRSADVVRLVSLEIVNLAVQVQQLDAASLAFLKDSLLDYVRRTYGPGAQDEPDVPSLQNKLTQTLTYLFARLYKSGWETFLSDFLALTASSEGNPRQRDNVRGVTLYLRILGSVHDEIADNMLARQGNEGKRNAELKDAIRERDMRMVVESWQDLLSQYTGRDDAILEHTLKVMAKWVSWIDISLVITQDMLNLLFPLIGCVNPQGGADMVRDAAIEAFTEIAGKKMKPVDKTELISFLNLRQIISELVASPPLSQFRGTHRYDSDLAESVAKLVNVVVTDVVKVLEDGSVGEESRAKAGQHLQDFLPLLLRLFSDEYDEVCSTVIPSLTDILTFLRKVPELPDSYREMLRPIMDAIVAKMRFDETSHWFEGEEAEEEADFLELRKRLQNLQKSVAAVDENLFIDVMSNLVATTLQNLDERGAQMDWRDIDLALHELLQFGELALPNQGLAAKSQPSSNAAERLNVIMRKLVESSIADFPHPAVLLQYMEVCVRYCVFFETNHSYIPRVLENFVRLVHYDLTRFRVRSWYLFHRFVKQLRAQVGNVAETIIQSIADLLPIKAEVSAEDGSEDDMSSDQTDNSADAIFNSQLYLFEAIGYISSTSATPVDKQALYARSVMEPLFRDMENHLEKAKSGDAQAILQIHHVIMALGTLAHGFGDHAKPGHQRQAPDKLVSAEFARAAEAILIALGQLNSRMDIRAACRSAFSKLLNVLGSAVLPQLPQWIEGLLSQSSSKDEMAMFLRLLDQVVYGFKTEISDVLNLLLTPLLQRVFGGLAEPINGTDDEIQLGELRREYLTFLQIILDNDLGAVLVSETNQGFFESIISSVVTLAKTGGHVNMVASRLAFCTLYRIVGVWGGPDVANISANPSAPTGTPTPAIPGFDQFMIERFHPVCFEVLQDPQFNPSKDAQSKQVLNEIAALEQAIYVKTGNSFISHLQSSLFPALGIDGTEFLRCMTTSTDKKTFGNYLQNLIKNRR.

It belongs to the exportin family.

The protein resides in the nucleus. The protein localises to the cytoplasm. In terms of biological role, tRNA nucleus export receptor which facilitates tRNA translocation across the nuclear pore complex. Involved in pre-tRNA splicing, probably by affecting the interaction of pre-tRNA with splicing endonuclease. This chain is Exportin-T (LOS1), found in Pyricularia oryzae (strain 70-15 / ATCC MYA-4617 / FGSC 8958) (Rice blast fungus).